A 462-amino-acid polypeptide reads, in one-letter code: Retinoic acid receptor RXR-alpha (462 aa).

The interval 1 to 107 (MDTKHFLPLD…MNPVSSSEDI (107 aa)) is disordered. Residues 1–134 (MDTKHFLPLD…GNMASFTKHI (134 aa)) form a modulating region. Residue lysine 4 forms a Glycyl lysine isopeptide (Lys-Gly) (interchain with G-Cter in SUMO2) linkage. The span at 11 to 24 (FSTQVNSSLTSPTG) shows a compositional bias: polar residues. Phosphoserine occurs at positions 21 and 27. Polar residues predominate over residues 49–58 (SPISTLSSPI). Phosphoserine; by MAPK8 and MAPK9 is present on residues serine 56 and serine 70. Positions 78–104 (SVPTTPTLGFSTGSPQLSSPMNPVSSS) are enriched in polar residues. Position 82 is a phosphothreonine; by MAPK8 and MAPK9 (threonine 82). Residue lysine 108 forms a Glycyl lysine isopeptide (Lys-Gly) (interchain with G-Cter in SUMO) linkage. Serine 129 is subject to Phosphoserine. Residues cysteine 135 and cysteine 138 each contribute to the Zn(2+) site. The segment at 135 to 155 (CAICGDRSSGKHYGVYSCEGC) adopts an NR C4-type zinc-finger fold. The nuclear receptor DNA-binding region spans 135 to 200 (CAICGDRSSG…RYQKCLAMGM (66 aa)). Residue lysine 145 is modified to N6-acetyllysine; by EP300. Positions 152 and 155 each coordinate Zn(2+). The nuclear localization signal stretch occupies residues 160–165 (KRTVRK). Zn(2+)-binding residues include cysteine 171, cysteine 177, cysteine 187, and cysteine 190. The NR C4-type zinc finger occupies 171–195 (CRDNKDCLIDKRQRNRCQYCRYQKC). The interval 201–224 (KREAVQEERQRGKDRNENEVESTS) is hinge. The segment covering 206–218 (QEERQRGKDRNEN) has biased composition (basic and acidic residues). Residues 206 to 228 (QEERQRGKDRNENEVESTSSANE) are disordered. The region spanning 227–458 (NEDMPVERIL…TFLMEMLEAP (232 aa)) is the NR LBD domain. A Phosphoserine modification is found at serine 259. A Phosphoserine; by MAPK8 and MAPK9 modification is found at serine 260. Residues arginine 316 and alanine 327 each coordinate 9-cis-retinoate. Residues arginine 316 and alanine 327 each coordinate all-trans-retinoate. Residues 348–368 (RVLTELVSKMRDMQMDKTELG) form a required for nuclear export region.

The protein belongs to the nuclear hormone receptor family. NR2 subfamily. As to quaternary structure, homodimer. Heterodimer (via C-terminus) with RARA; required for ligand-dependent retinoic acid receptor transcriptional activity; association with RARA is enhanced by pulsatile shear stress. Heterodimer with PPARA (via the leucine-like zipper in the LBD); the interaction is required for PPARA transcriptional activity. Heterodimerizes with PPARG. Heterodimerizes (via NR LBD) with RARB. Heterodimerizes with NR1H4; the heterodimerization enhances the binding affinity for LXXLL motifs from coactivators. Interacts with NCOA3 and NCOA6 coactivators. Interacts with coactivator FAM120B. Interacts with coactivator PELP1, SENP6, SFPQ, DNTTIP2 and RNF8. Interacts with PRMT2. Interacts with ASXL1. Interacts with BHLHE40/DEC1, BHLHE41/DEC2, NCOR1 and NCOR2. Interacts in a ligand-dependent fashion with MED1 and NCOA1. Interacts with VDR. Interacts with EP300; the interaction is decreased by 9-cis retinoic acid. Heterodimer (via C-terminus) with NR4A1 (via DNA-binding domain); DNA-binding of the heterodimer is enhanced by 9-cis retinoic acid. NR4A1 competes with EP300 for interaction with RXRA and thereby attenuates EP300 mediated acetylation of RXRA. In the absence of hormonal ligand, interacts with TACC1. Interacts ith IGFBP3. (Microbial infection) Interacts (via the DNA binding domain) with HCV core protein; the interaction enhances the transcriptional activities of the RXRA/RARA and the RXRA/PPARA heterodimers. Post-translationally, acetylated by EP300; acetylation enhances DNA binding and transcriptional activity. In terms of processing, phosphorylated on serine and threonine residues mainly in the N-terminal modulating domain. Constitutively phosphorylated on Ser-21 in the presence or absence of ligand. Under stress conditions, hyperphosphorylated by activated JNK on Ser-56, Ser-70, Thr-82 and Ser-260. Phosphorylated on Ser-27, in vitro, by PKA. This phosphorylation is required for repression of cAMP-mediated transcriptional activity of RARA. Ubiquitinated by UBR5, leading to its degradation: UBR5 specifically recognizes and binds ligand-bound RXRA when it is not associated with coactivators (NCOAs). In presence of NCOAs, the UBR5-degron is not accessible, preventing its ubiquitination and degradation. Post-translationally, sumoylation negatively regulates transcriptional activity. Desumoylated specifically by SENP6. Expressed in lung fibroblasts (at protein level). Expressed in monocytes. Highly expressed in liver, also found in kidney and brain.

The protein resides in the nucleus. It is found in the cytoplasm. The protein localises to the mitochondrion. Receptor for retinoic acid that acts as a transcription factor. Forms homo- or heterodimers with retinoic acid receptors (RARs) and binds to target response elements in response to their ligands, all-trans or 9-cis retinoic acid, to regulate gene expression in various biological processes. The RAR/RXR heterodimers bind to the retinoic acid response elements (RARE) composed of tandem 5'-AGGTCA-3' sites known as DR1-DR5 to regulate transcription. The high affinity ligand for retinoid X receptors (RXRs) is 9-cis retinoic acid. In the absence of ligand, the RXR-RAR heterodimers associate with a multiprotein complex containing transcription corepressors that induce histone deacetylation, chromatin condensation and transcriptional suppression. On ligand binding, the corepressors dissociate from the receptors and coactivators are recruited leading to transcriptional activation. Serves as a common heterodimeric partner for a number of nuclear receptors, such as RARA, RARB and PPARA. The RXRA/RARB heterodimer can act as a transcriptional repressor or transcriptional activator, depending on the RARE DNA element context. The RXRA/PPARA heterodimer is required for PPARA transcriptional activity on fatty acid oxidation genes such as ACOX1 and the P450 system genes. Together with RARA, positively regulates microRNA-10a expression, thereby inhibiting the GATA6/VCAM1 signaling response to pulsatile shear stress in vascular endothelial cells. Acts as an enhancer of RARA binding to RARE DNA element. May facilitate the nuclear import of heterodimerization partners such as VDR and NR4A1. Promotes myelin debris phagocytosis and remyelination by macrophages. Plays a role in the attenuation of the innate immune system in response to viral infections, possibly by negatively regulating the transcription of antiviral genes such as type I IFN genes. Involved in the regulation of calcium signaling by repressing ITPR2 gene expression, thereby controlling cellular senescence. The chain is Retinoic acid receptor RXR-alpha (RXRA) from Homo sapiens (Human).